The chain runs to 304 residues: Acetyl-coenzyme A carboxylase carboxyl transferase subunit beta (304 aa).

Residues 23–292 (VWTKCDSCGQ…PNPEAPREGV (270 aa)) form the CoA carboxyltransferase N-terminal domain. Positions 27, 30, 46, and 49 each coordinate Zn(2+). The C4-type zinc finger occupies 27–49 (CDSCGQVLYRAELERNLEVCPKC). Residues 284–304 (NPEAPREGVVVPPVPDQEPEA) are disordered. A compositionally biased stretch (pro residues) spans 295–304 (PPVPDQEPEA).

This sequence belongs to the AccD/PCCB family. In terms of assembly, acetyl-CoA carboxylase is a heterohexamer composed of biotin carboxyl carrier protein (AccB), biotin carboxylase (AccC) and two subunits each of ACCase subunit alpha (AccA) and ACCase subunit beta (AccD). Zn(2+) serves as cofactor.

The protein localises to the cytoplasm. The catalysed reaction is N(6)-carboxybiotinyl-L-lysyl-[protein] + acetyl-CoA = N(6)-biotinyl-L-lysyl-[protein] + malonyl-CoA. The protein operates within lipid metabolism; malonyl-CoA biosynthesis; malonyl-CoA from acetyl-CoA: step 1/1. Its function is as follows. Component of the acetyl coenzyme A carboxylase (ACC) complex. Biotin carboxylase (BC) catalyzes the carboxylation of biotin on its carrier protein (BCCP) and then the CO(2) group is transferred by the transcarboxylase to acetyl-CoA to form malonyl-CoA. This chain is Acetyl-coenzyme A carboxylase carboxyl transferase subunit beta, found in Shigella flexneri.